The primary structure comprises 315 residues: Ester hydrolase C11orf54 homolog (315 aa).

Zn(2+) contacts are provided by His-266, His-268, and His-278.

Monomer. Zn(2+) serves as cofactor.

It is found in the nucleus. The protein resides in the cytoplasm. Its function is as follows. Exhibits ester hydrolase activity on the substrate p-nitrophenyl acetate, in vitro. Regulates DNA damage and repair by regulating HIF1A degradation via chaperone-mediated autophagy (CMA). The protein is Ester hydrolase C11orf54 homolog of Rattus norvegicus (Rat).